A 216-amino-acid polypeptide reads, in one-letter code: DNA repair and recombination protein RadB (216 aa).

The protein belongs to the eukaryotic RecA-like protein family. RadB subfamily.

In terms of biological role, involved in DNA repair and in homologous recombination. May regulate the cleavage reactions of the branch-structured DNA. Has a very weak ATPase activity that is not stimulated by DNA. Binds DNA but does not promote DNA strands exchange. This is DNA repair and recombination protein RadB from Methanococcus maripaludis (strain C5 / ATCC BAA-1333).